The chain runs to 439 residues: Chromosomal replication initiator protein DnaA (439 aa).

Residues 1–75 (MESWSRCLER…GIREVVLAIG (75 aa)) form a domain I, interacts with DnaA modulators region. The tract at residues 75–101 (GSRPKTTELPVPVDTTGRLSSTVPFNG) is domain II. Positions 102 to 319 (NLDTHYNFDN…GALNTLVARA (218 aa)) are domain III, AAA+ region. Residues Gly-147, Gly-149, Lys-150, and Thr-151 each contribute to the ATP site. Residues 320 to 439 (NFTGRAVTIE…WDKLMRKFSE (120 aa)) are domain IV, binds dsDNA.

Belongs to the DnaA family. As to quaternary structure, oligomerizes as a right-handed, spiral filament on DNA at oriC.

It localises to the cytoplasm. In terms of biological role, plays an essential role in the initiation and regulation of chromosomal replication. ATP-DnaA binds to the origin of replication (oriC) to initiate formation of the DNA replication initiation complex once per cell cycle. Binds the DnaA box (a 9 base pair repeat at the origin) and separates the double-stranded (ds)DNA. Forms a right-handed helical filament on oriC DNA; dsDNA binds to the exterior of the filament while single-stranded (ss)DNA is stabiized in the filament's interior. The ATP-DnaA-oriC complex binds and stabilizes one strand of the AT-rich DNA unwinding element (DUE), permitting loading of DNA polymerase. After initiation quickly degrades to an ADP-DnaA complex that is not apt for DNA replication. Binds acidic phospholipids. This chain is Chromosomal replication initiator protein DnaA, found in Xylella fastidiosa (strain 9a5c).